The following is a 272-amino-acid chain: MLAVSSHNLWIALAVTLAAGLATGLGSLMVVFAKKPNPRLLAFGLAFAGGAMVYVSLTEILNKSIAAFSQAYNDKLGFTFGTLTFLGGMLLIMVIDRLVPNPHQSLSSDDPQFREDNRAYIRRVGLMTAVAITAHNFPEGLATFFATLESPAVGMPLAFAIAIHNIPEGIAIAVPVYFATRNKFYAVGASLLSGLAEPVGAGIGYLALFSVLSDAVFGTVFGLISGVMVFLALDELLPAAKRYAQGHETVYGLVSGMGTLAISLVLFRFATP.

8 consecutive transmembrane segments (helical) span residues 11–31, 40–60, 76–96, 126–146, 158–178, 189–209, 211–231, and 250–270; these read IALA…LMVV, LLAF…LTEI, LGFT…MVID, LMTA…TFFA, AFAI…PVYF, ASLL…LALF, VLSD…MVFL, and VYGL…FRFA. Positions 136 and 139 each coordinate Fe(2+). Zn(2+) contacts are provided by Glu-139 and His-164. Positions 165, 168, and 197 each coordinate Fe(2+). Zn(2+) is bound at residue Glu-168.

This sequence belongs to the ZIP transporter (TC 2.A.5) family. ZupT subfamily.

It localises to the cell inner membrane. The catalysed reaction is Zn(2+)(in) = Zn(2+)(out). Functionally, mediates zinc uptake. May also transport other divalent cations. This Xanthomonas axonopodis pv. citri (strain 306) protein is Zinc transporter ZupT.